Here is a 512-residue protein sequence, read N- to C-terminus: ATP synthase subunit alpha (512 aa).

Residue G169 to T176 coordinates ATP.

The protein belongs to the ATPase alpha/beta chains family. F-type ATPases have 2 components, CF(1) - the catalytic core - and CF(0) - the membrane proton channel. CF(1) has five subunits: alpha(3), beta(3), gamma(1), delta(1), epsilon(1). CF(0) has three main subunits: a(1), b(2) and c(9-12). The alpha and beta chains form an alternating ring which encloses part of the gamma chain. CF(1) is attached to CF(0) by a central stalk formed by the gamma and epsilon chains, while a peripheral stalk is formed by the delta and b chains.

Its subcellular location is the cell inner membrane. The enzyme catalyses ATP + H2O + 4 H(+)(in) = ADP + phosphate + 5 H(+)(out). In terms of biological role, produces ATP from ADP in the presence of a proton gradient across the membrane. The alpha chain is a regulatory subunit. This is ATP synthase subunit alpha from Orientia tsutsugamushi (strain Ikeda) (Rickettsia tsutsugamushi).